The sequence spans 539 residues: Cell division control protein 6 homolog (539 aa).

The disordered stretch occupies residues 1–40; sequence MPAIAGPSSSPQKHVVGSRSESIGGVRSAEVNTSRKRKLI. The Nuclear localization signal motif lies at 35 to 38; the sequence is RKRK.

It belongs to the CDC6/cdc18 family. As to expression, highly expressed in roots, flower buds and etiolated seedlings. Expressed in leaves and stems. Highly expressed in proliferating cells such as root meristems, leaf primordia and young growing leaves, as well as cells undergoing endoreduplication cycles.

The protein resides in the nucleus. In terms of biological role, may be involved in the initiation of DNA replication. May play a role in endoreduplication. Could act as one of the factors that contributes to maintain endoreduplication competence. The protein is Cell division control protein 6 homolog of Arabidopsis thaliana (Mouse-ear cress).